Consider the following 558-residue polypeptide: Delta-1-pyrroline-5-carboxylate dehydrogenase, mitochondrial (558 aa).

NAD(+)-binding positions include S198, K223, and 276-280; that span reads GSTGV. The active-site Proton acceptor is E306. C340 (nucleophile) is an active-site residue. NAD(+) is bound at residue E438.

The protein belongs to the aldehyde dehydrogenase family.

It is found in the mitochondrion matrix. It carries out the reaction L-glutamate 5-semialdehyde + NAD(+) + H2O = L-glutamate + NADH + 2 H(+). The protein operates within amino-acid degradation; L-proline degradation into L-glutamate; L-glutamate from L-proline: step 2/2. Irreversible conversion of delta-1-pyrroline-5-carboxylate (P5C), derived either from proline or ornithine, to glutamate. This is a necessary step in the pathway interconnecting the urea and tricarboxylic acid cycles. This is Delta-1-pyrroline-5-carboxylate dehydrogenase, mitochondrial from Dictyostelium discoideum (Social amoeba).